The following is a 395-amino-acid chain: Zinc finger protein 385D (395 aa).

The Matrin-type 1 zinc-finger motif lies at 80–110; the sequence is ISCNICQLRFNSDSQAAAHYKGTKHAKKLKA. Residues 169–193 show a composition bias toward polar residues; it reads MTTEITSKVEKSPTTATGNSSCPST. Residues 169-194 are disordered; that stretch reads MTTEITSKVEKSPTTATGNSSCPSTE. 2 consecutive Matrin-type zinc fingers follow at residues 204–234 and 267–297; these read LYCS…MLEA and FHCE…RAAG. The interval 282–309 is disordered; it reads LKQHISSRRHKDRAAGKPPKPKYSPYNK.

The protein localises to the nucleus. The chain is Zinc finger protein 385D (ZNF385D) from Homo sapiens (Human).